Reading from the N-terminus, the 307-residue chain is Putative transcription factor bHLH086 (307 aa).

2 disordered regions span residues 1–49 (MSLI…DHQN) and 167–215 (HEST…QSLA). Polar residues-rich tracts occupy residues 12–28 (NYIS…SPQN) and 183–197 (GENT…SGTN). The interval 207–220 (SPKDPQSLAAKNRR) is basic motif. Residues 207-256 (SPKDPQSLAAKNRRERISERLKVLQELVPNGTKVDLVTMLEKAIGYVKFL) enclose the bHLH domain. The interval 221-256 (ERISERLKVLQELVPNGTKVDLVTMLEKAIGYVKFL) is helix-loop-helix motif.

As to quaternary structure, homodimer. Forms heterodimers with RHD6. Interacts with TIFY10B/JAZ2, TIFY6A/JAZ4, TIFY5A/JAZ8, TIFY7/JAZ9 and TIFY9/JAZ10.

It is found in the nucleus. In terms of biological role, transcription factor that is specifically required for the development of root hairs. Acts with RHD6 to positively regulate root hair development. Acts downstream of genes that regulate epidermal pattern formation, such as GL2. Acts with RHD6 as transcription factor that integrates a jasmonate (JA) signaling pathway that stimulates root hair growth. This chain is Putative transcription factor bHLH086, found in Arabidopsis thaliana (Mouse-ear cress).